We begin with the raw amino-acid sequence, 403 residues long: Phosphoglycerate kinase (403 aa).

Residues 21-23 (DFN), R37, 60-63 (HLGR), R125, and R158 contribute to the substrate site. ATP is bound by residues K209, E332, and 359–362 (GGDS).

The protein belongs to the phosphoglycerate kinase family. As to quaternary structure, monomer.

It is found in the cytoplasm. It carries out the reaction (2R)-3-phosphoglycerate + ATP = (2R)-3-phospho-glyceroyl phosphate + ADP. The protein operates within carbohydrate degradation; glycolysis; pyruvate from D-glyceraldehyde 3-phosphate: step 2/5. In Koribacter versatilis (strain Ellin345), this protein is Phosphoglycerate kinase.